Here is a 186-residue protein sequence, read N- to C-terminus: Zein-alpha PZ19.1 (186 aa).

The signal sequence occupies residues 1-21; the sequence is MAAKIFCLIMLLGLSASAATA.

It belongs to the zein family.

Functionally, zeins are major seed storage proteins. This chain is Zein-alpha PZ19.1, found in Zea mays (Maize).